A 290-amino-acid chain; its full sequence is Nucleoid occlusion protein (290 aa).

The H-T-H motif DNA-binding region spans 153–172; that stretch reads EALAQRLGKGQSTIANKLRL.

Belongs to the ParB family.

The protein resides in the cytoplasm. Its subcellular location is the nucleoid. Its function is as follows. Effects nucleoid occlusion by binding relatively nonspecifically to DNA and preventing the assembly of the division machinery in the vicinity of the nucleoid, especially under conditions that disturb the cell cycle. It helps to coordinate cell division and chromosome segregation by preventing the formation of the Z ring through the nucleoid, which would cause chromosome breakage. In Bacillus cytotoxicus (strain DSM 22905 / CIP 110041 / 391-98 / NVH 391-98), this protein is Nucleoid occlusion protein.